Consider the following 156-residue polypeptide: Ribosomal RNA large subunit methyltransferase H (156 aa).

S-adenosyl-L-methionine is bound by residues leucine 73, glycine 104, and 123-128 (LSALTL).

The protein belongs to the RNA methyltransferase RlmH family. As to quaternary structure, homodimer.

It localises to the cytoplasm. It catalyses the reaction pseudouridine(1915) in 23S rRNA + S-adenosyl-L-methionine = N(3)-methylpseudouridine(1915) in 23S rRNA + S-adenosyl-L-homocysteine + H(+). Functionally, specifically methylates the pseudouridine at position 1915 (m3Psi1915) in 23S rRNA. This chain is Ribosomal RNA large subunit methyltransferase H, found in Shewanella sediminis (strain HAW-EB3).